The following is a 911-amino-acid chain: MFAPLLKKLFGSKNEREVKRMLKTVSIVNAFEEKMVALSDEQLRGKTAEFKERLAKGETLDQLLPEAFAVAREAGKRVMGMRHFDVQLIGGMTLHEGMIAEMRTGEGKTLVGTLAVYLNALSGKGVHVVTVNDYLARRDANWMRPLYEFLGLSVGIVSAFQPPEEKRAAYAADITYGTNNEFGFDYLRDNMAFSQDEKFQRELNFAVIDEVDSILIDEARTPLIISGQAEDSSKLYIEINRLIPRLTQHIEEVEGQVTQEGHFTIDEKSRQVELNEAGHQFIEEMLAQAGLLAEGESLYSAHNLGLLTHVYAGLRAHKLFHRNVEYIVQDGQVLLIDEHTGRTMPGRRLSEGLHQAIEAKENLNIQAESQTLASTTFQNYFRLYTKLSGMTGTADTEAFEFQSIYGLNVMVIPPNKPLARKDYNDLVYLTADEKYAAIIADIKESMKLGRPVLVGTATIETSEHMSNLLKKEGIDHKVLNAKYHEKEAEIIAQAGAPGALTIATNMAGRGTDILLGGNWEAEVAALENPTAEQIAQIKADWQKRHQQVIETGGLHVIASERHESRRIDNQLRGRSGRQGDPGSSRFYLSLEDSLMRIFASDRVKNFMKALGMQSGEAIEHRMVTNAIEKAQRKVEGRNFDIRKQLLEYDDVANEQRKVIYHMRNSLLAAENIGDTIVEFRKEVLDATISQHIPPQSLPEQWDVAGLEASLASDFAIKLPIRQWLDEDDHLYEETLREKLLSEITTAYTEKEDQAGLEALRTFEKQILLRVLDDLWKDHLSTMDHLRHGIHLRGYAQKNPKQEYKRESFSLFQELLESIKRDTIRVLSHVQVRREDPAEEEARLRREAEELASRMQFQHAAAPGLGSEQLSEEGAEVAVASAPVRNDQKLGRNEPCWCGSGKKFKHCHGQIE.

ATP is bound by residues Q87, 105 to 109, and D512; that span reads GEGKT. The segment at 861-880 is disordered; that stretch reads APGLGSEQLSEEGAEVAVAS. The Zn(2+) site is built by C895, C897, C906, and H907.

It belongs to the SecA family. In terms of assembly, monomer and homodimer. Part of the essential Sec protein translocation apparatus which comprises SecA, SecYEG and auxiliary proteins SecDF-YajC and YidC. The cofactor is Zn(2+).

The protein resides in the cell inner membrane. Its subcellular location is the cytoplasm. It carries out the reaction ATP + H2O + cellular proteinSide 1 = ADP + phosphate + cellular proteinSide 2.. Functionally, part of the Sec protein translocase complex. Interacts with the SecYEG preprotein conducting channel. Has a central role in coupling the hydrolysis of ATP to the transfer of proteins into and across the cell membrane, serving both as a receptor for the preprotein-SecB complex and as an ATP-driven molecular motor driving the stepwise translocation of polypeptide chains across the membrane. The polypeptide is Protein translocase subunit SecA (Pseudomonas putida (strain ATCC 47054 / DSM 6125 / CFBP 8728 / NCIMB 11950 / KT2440)).